We begin with the raw amino-acid sequence, 113 residues long: Large ribosomal subunit protein uL22 (113 aa).

Belongs to the universal ribosomal protein uL22 family. As to quaternary structure, part of the 50S ribosomal subunit.

In terms of biological role, this protein binds specifically to 23S rRNA; its binding is stimulated by other ribosomal proteins, e.g. L4, L17, and L20. It is important during the early stages of 50S assembly. It makes multiple contacts with different domains of the 23S rRNA in the assembled 50S subunit and ribosome. The globular domain of the protein is located near the polypeptide exit tunnel on the outside of the subunit, while an extended beta-hairpin is found that lines the wall of the exit tunnel in the center of the 70S ribosome. The chain is Large ribosomal subunit protein uL22 from Geobacillus kaustophilus (strain HTA426).